The chain runs to 237 residues: Concanavalin-A (237 aa).

Positions 8 and 10 each coordinate Mn(2+). 4 residues coordinate Ca(2+): aspartate 10, tyrosine 12, asparagine 14, and aspartate 19. An a carbohydrate-binding site is contributed by tyrosine 12. Mn(2+) is bound by residues aspartate 19 and histidine 24. 99–100 (LY) contributes to the a carbohydrate binding site. Aspartate 208 contacts Ca(2+). Arginine 228 serves as a coordination point for a carbohydrate.

This sequence belongs to the leguminous lectin family. Homotetramer.

Functionally, glucose/D-mannose specific lectin. The chain is Concanavalin-A from Canavalia lineata (Beach bean).